Consider the following 135-residue polypeptide: uncharacterized protein (135 aa).

A run of 4 helical transmembrane segments spans residues 7 to 25 (WSAAVLAAAVSFLYGEWTI), 29 to 51 (ILLTLVVIDYGTGLVAAGVTGNI), 64 to 85 (VFIFVMVAIAHMIDTVLLEVGI), and 89 to 108 (ALIFMAAVVFYIVNELISIF).

It belongs to the bacteriophage holin family. Cp-1 holin subfamily.

It is found in the cell membrane. This is an uncharacterized protein from Halalkalibacterium halodurans (strain ATCC BAA-125 / DSM 18197 / FERM 7344 / JCM 9153 / C-125) (Bacillus halodurans).